The chain runs to 470 residues: Tryptophan synthase beta chain 1, chloroplastic (470 aa).

Residues 1-10 (MAASGTSATF) are compositionally biased toward polar residues. The segment at 1-24 (MAASGTSATFRASVSSAPSSSSQL) is disordered. Positions 12-22 (ASVSSAPSSSS) are enriched in low complexity. N6-(pyridoxal phosphate)lysine is present on K165.

It belongs to the TrpB family. As to quaternary structure, tetramer of two alpha and two beta chains. The cofactor is pyridoxal 5'-phosphate.

Its subcellular location is the plastid. It localises to the chloroplast. The enzyme catalyses (1S,2R)-1-C-(indol-3-yl)glycerol 3-phosphate + L-serine = D-glyceraldehyde 3-phosphate + L-tryptophan + H2O. It functions in the pathway amino-acid biosynthesis; L-tryptophan biosynthesis; L-tryptophan from chorismate: step 5/5. The beta subunit is responsible for the synthesis of L-tryptophan from indole and L-serine. The protein is Tryptophan synthase beta chain 1, chloroplastic (TSB1) of Arabidopsis thaliana (Mouse-ear cress).